Here is a 241-residue protein sequence, read N- to C-terminus: dTTP/UTP pyrophosphatase (241 aa).

Phosphoserine is present on S38. The Proton acceptor role is filled by D105.

The protein belongs to the Maf family. YhdE subfamily. It depends on a divalent metal cation as a cofactor.

It is found in the cytoplasm. The protein localises to the nucleus. The enzyme catalyses dTTP + H2O = dTMP + diphosphate + H(+). The catalysed reaction is UTP + H2O = UMP + diphosphate + H(+). Nucleoside triphosphate pyrophosphatase that hydrolyzes dTTP and UTP. May have a dual role in cell division arrest and in preventing the incorporation of modified nucleotides into cellular nucleic acids. In Schizosaccharomyces pombe (strain 972 / ATCC 24843) (Fission yeast), this protein is dTTP/UTP pyrophosphatase.